A 1323-amino-acid chain; its full sequence is Traf2 and NCK-interacting protein kinase (1323 aa).

One can recognise a Protein kinase domain in the interval 25–289 (FELVELVGNG…TEQLMKHPFI (265 aa)). ATP-binding positions include 31–39 (VGNGTYGQV) and lysine 54. Catalysis depends on aspartate 153, which acts as the Proton acceptor. Threonine 187 carries the phosphothreonine modification. Disordered regions lie at residues 284–347 (MKHP…LPGE), 397–559 (EQKE…LRPV), and 571–838 (SQGP…NEQY). The span at 288-307 (FIRDQPNERQVRIQLKDHID) shows a compositional bias: basic and acidic residues. The tract at residues 290–1010 (RDQPNERQVR…EIRKYKKRFN (721 aa)) is mediates interaction with NEDD4. A compositionally biased stretch (acidic residues) spans 317 to 335 (DETEYEYSGSEEEEEENDS). Residues serine 324 and serine 326 each carry the phosphoserine modification. Basic and acidic residues-rich tracts occupy residues 397 to 470 (EQKE…ERDY), 477 to 494 (QRQE…HYKE), and 503 to 513 (AWAKEVEERSR). A phosphoserine mark is found at serine 531 and serine 541. Threonine 552 bears the Phosphothreonine mark. Serine 571, serine 579, serine 581, and serine 611 each carry phosphoserine. The span at 623-640 (RIEKFDRSSWLRQEEDIP) shows a compositional bias: basic and acidic residues. A phosphoserine mark is found at serine 649, serine 651, serine 659, serine 672, serine 678, serine 691, serine 735, serine 737, and serine 740. Over residues 691–726 (SSLQRTSSGSSSSSSTPSSQPSSQGGSQPGSQAGSS) the composition is skewed to low complexity. Basic and acidic residues-rich tracts occupy residues 746–760 (EPSK…DITR) and 772–790 (KELR…KKVT). Over residues 797–810 (EESESSEEEEEDGE) the composition is skewed to acidic residues. Serine 922 is modified (phosphoserine). Residues 939–960 (FVDPRVYQTSPTDEDEEDDESS) form a disordered region. Positions 950 to 959 (TDEDEEDDES) are enriched in acidic residues. A CNH domain is found at 1010-1297 (NSEILCAALW…KFLCERNDKV (288 aa)).

The protein belongs to the protein kinase superfamily. STE Ser/Thr protein kinase family. STE20 subfamily. Interacts (via the CNH domain) with RAP2A (GTP-bound form preferentially); the interaction is direct and required for the activation of TNIK by RAP2A. Interacts with NEDD4; recruits RAP2A to NEDD4. Interacts with TRAF2 and NCK. Interacts with TCF7L2/TCF4 and CTNNB1; the interaction is direct. Interacts with TANC1. In terms of processing, autophosphorylated. Autophosphorylation is activated by RAP2A and induces association to the cytoskeletal fraction.

It localises to the nucleus. The protein resides in the cytoplasm. It is found in the recycling endosome. Its subcellular location is the cytoskeleton. The enzyme catalyses L-seryl-[protein] + ATP = O-phospho-L-seryl-[protein] + ADP + H(+). It catalyses the reaction L-threonyl-[protein] + ATP = O-phospho-L-threonyl-[protein] + ADP + H(+). Its function is as follows. Serine/threonine kinase that acts as an essential activator of the Wnt signaling pathway. Recruited to promoters of Wnt target genes and required to activate their expression. May act by phosphorylating TCF4/TCF7L2. Appears to act upstream of the JUN N-terminal pathway. May play a role in the response to environmental stress. Part of a signaling complex composed of NEDD4, RAP2A and TNIK which regulates neuronal dendrite extension and arborization during development. More generally, it may play a role in cytoskeletal rearrangements and regulate cell spreading. Phosphorylates SMAD1 on Thr-322. Activator of the Hippo signaling pathway which plays a pivotal role in organ size control and tumor suppression by restricting proliferation and promoting apoptosis. MAP4Ks act in parallel to and are partially redundant with STK3/MST2 and STK4/MST2 in the phosphorylation and activation of LATS1/2, and establish MAP4Ks as components of the expanded Hippo pathway. The polypeptide is Traf2 and NCK-interacting protein kinase (Tnik) (Mus musculus (Mouse)).